The following is a 202-amino-acid chain: MSRYRGPRLKIVRRLGELPGLTRKMAKRKSPPGQHGAASKKPSQYRIRLEEKQKLRYNYGVTEKQLLRYMQRARRAKGSSGENLLQLLEMRLDTTIFRLGMAPTMLSARQLITHGHILVSEQRVNIPSYQCSPKEKISIRSNSRSRKLIEGYMSTMGSIVTPPHLELKKEKLEGNIQEIIDRQWVGLPINELLVVEYYSPKV.

The segment at 18–45 is disordered; sequence LPGLTRKMAKRKSPPGQHGAASKKPSQY. One can recognise an S4 RNA-binding domain in the interval 90–152; it reads MRLDTTIFRL…SRSRKLIEGY (63 aa).

Belongs to the universal ribosomal protein uS4 family. Part of the 30S ribosomal subunit. Contacts protein S5. The interaction surface between S4 and S5 is involved in control of translational fidelity.

It localises to the plastid. The protein resides in the chloroplast. Functionally, one of the primary rRNA binding proteins, it binds directly to 16S rRNA where it nucleates assembly of the body of the 30S subunit. Its function is as follows. With S5 and S12 plays an important role in translational accuracy. In Nephroselmis olivacea (Green alga), this protein is Small ribosomal subunit protein uS4c (rps4).